We begin with the raw amino-acid sequence, 317 residues long: Melanocyte-stimulating hormone receptor (317 aa).

The Extracellular portion of the chain corresponds to 1 to 37; that stretch reads MPMQGAQRKLLGSLNSTPTATSNLGLAANHTGAPCLE. An N-linked (GlcNAc...) asparagine glycan is attached at asparagine 29. Residues 38–63 traverse the membrane as a helical segment; the sequence is VSIPDGLFLSLGLVSLVENVLVVAAV. Over 64–72 the chain is Cytoplasmic; sequence AKNRNLHSS. The helical transmembrane segment at 73–93 threads the bilayer; sequence MYCFICCLALSDLLVSGSNML. At 94–118 the chain is on the extracellular side; that stretch reads ETAVILLLETGALATRTSVVQQLHN. The helical transmembrane segment at 119–140 threads the bilayer; sequence TINVLTCSSMLCSLCFLGAIAV. The Cytoplasmic segment spans residues 141–163; the sequence is DRYISIFYALRYHSIMTLPRAQR. A helical transmembrane segment spans residues 164 to 183; it reads AIAAIWVASVLSSTLFITYY. The Extracellular segment spans residues 184 to 191; it reads DHAAVLLC. A helical transmembrane segment spans residues 192-211; sequence LVVFFLAMLVLMAVLYVHML. The Cytoplasmic portion of the chain corresponds to 212 to 240; the sequence is ARACQHAHGIIRLHKRQTPAHQGFGLRGA. Residues 241-266 traverse the membrane as a helical segment; it reads ATLTILLGIFFLCWGPFFLHLTLVVF. At 267–279 the chain is on the extracellular side; the sequence is CPQHLTCSCIFKN. The chain crosses the membrane as a helical span at residues 280–300; sequence FKVFLTLIICNTIIDPLIYAF. The Cytoplasmic segment spans residues 301-317; the sequence is RSQELRRTLKEVLLCSW. Cysteine 315 is lipidated: S-palmitoyl cysteine.

This sequence belongs to the G-protein coupled receptor 1 family. In terms of assembly, interacts with MGRN1, but does not undergo MGRN1-mediated ubiquitination; this interaction competes with GNAS-binding and thus inhibits agonist-induced cAMP production. Interacts with OPN3; the interaction results in a decrease in MC1R-mediated cAMP signaling and ultimately a decrease in melanin production in melanocytes.

Its subcellular location is the cell membrane. Functionally, receptor for MSH (alpha, beta and gamma) and ACTH. The activity of this receptor is mediated by G proteins which activate adenylate cyclase. Mediates melanogenesis, the production of eumelanin (black/brown) and phaeomelanin (red/yellow), via regulation of cAMP signaling in melanocytes. The chain is Melanocyte-stimulating hormone receptor (MC1R) from Saguinus oedipus (Cotton-top tamarin).